The sequence spans 322 residues: Ribosome biogenesis protein RLP7 (322 aa).

The span at 1-16 shows a compositional bias: polar residues; sequence MSSTQDSKAQTLNSNP. The tract at residues 1 to 52 is disordered; sequence MSSTQDSKAQTLNSNPEILLRKRRNADRTRIERQELAKKKREEQIKKKRSNK. S2 is subject to N-acetylserine. S14 is modified (phosphoserine). Residues 26 to 45 are compositionally biased toward basic and acidic residues; the sequence is ADRTRIERQELAKKKREEQI. Position 120 is a phosphothreonine (T120). S278 is subject to Phosphoserine.

This sequence belongs to the universal ribosomal protein uL30 family.

Its subcellular location is the nucleus. The protein resides in the nucleolus. Involved in the biogenesis of the 60S ribosomal subunit. May act as a specificity factor that binds precursor rRNAs and tethers the enzymes that carry out the early 5' to 3' exonucleolytic reactions that generate the mature rRNAs. The sequence is that of Ribosome biogenesis protein RLP7 (RLP7) from Saccharomyces cerevisiae (strain ATCC 204508 / S288c) (Baker's yeast).